Consider the following 302-residue polypeptide: RING-H2 finger protein ATL38 (302 aa).

Residues 15–35 traverse the membrane as a helical segment; that stretch reads LLVITIILFAIFIVGLASVCF. The segment at 96–138 adopts an RING-type; atypical zinc-finger fold; sequence CAVCICEFEDHETLRLMPECCHVFHADCVSVWLSDHSTCPLCR. Residues 279-302 are disordered; sequence GEAVAPSKDSRRISVEQSQLDDRV. The segment covering 286-302 has biased composition (basic and acidic residues); it reads KDSRRISVEQSQLDDRV.

Belongs to the RING-type zinc finger family. ATL subfamily.

It is found in the membrane. It catalyses the reaction S-ubiquitinyl-[E2 ubiquitin-conjugating enzyme]-L-cysteine + [acceptor protein]-L-lysine = [E2 ubiquitin-conjugating enzyme]-L-cysteine + N(6)-ubiquitinyl-[acceptor protein]-L-lysine.. It participates in protein modification; protein ubiquitination. The chain is RING-H2 finger protein ATL38 (ATL38) from Arabidopsis thaliana (Mouse-ear cress).